The chain runs to 312 residues: GATA transcription factor 6 (312 aa).

3 disordered regions span residues 1-33, 56-77, and 136-186; these read MESV…VDDL, QRKR…STAD, and KSQH…PLWL. Positions 56 to 71 are enriched in basic and acidic residues; it reads QRKRGVSDENTLHRSN. A compositionally biased stretch (basic residues) spans 142–151; it reads VKTRPKRART. Residues 143–150 carry the Nuclear localization signal motif; that stretch reads KTRPKRAR. A compositionally biased stretch (low complexity) spans 157–186; the sequence is SHGSQSLTDSSSSSTTSSSSSPRPSSPLWL. The GATA-type zinc finger occupies 217-271; sequence QTQTRQCGHCGVQKTPQWRAGPLGAKTLCNACGVRYKSGRLLPEYRPACSPTFSS.

This sequence belongs to the type IV zinc-finger family. Class A subfamily.

The protein resides in the nucleus. In terms of biological role, transcriptional activator that specifically binds 5'-GATA-3' or 5'-GAT-3' motifs within gene promoters. May be involved in the regulation of some light-responsive genes. The protein is GATA transcription factor 6 (GATA6) of Arabidopsis thaliana (Mouse-ear cress).